Consider the following 1523-residue polypeptide: Lysophospholipase nte1 (1523 aa).

Residues 1–66 are Cytoplasmic-facing; the sequence is MADGVTLVDS…LPPVPTTMAG (66 aa). The helical transmembrane segment at 67–87 threads the bilayer; sequence WIGWVFSFFFQVIPSVLYWVI. Over 88 to 109 the chain is Lumenal; it reads TFSTITLPTWLFTLFSMSLTFT. The chain crosses the membrane as a helical span at residues 110–130; the sequence is MNFTTLLLIVLAMVSTISWFI. Residues 131–1523 are Cytoplasmic-facing; the sequence is RYRFLNMYSR…RTMAPRRASI (1393 aa). Disordered regions lie at residues 309 to 384 and 524 to 545; these read VPNS…KSVH and RAAT…GVSP. The span at 370-382 shows a compositional bias: basic residues; sequence ESRKHSSRKRRKS. Residues 681–800 and 841–961 contribute to the a nucleoside 3',5'-cyclic phosphate site; these read GGTS…GAVA and RLTS…IAQR. The 165-residue stretch at 1220–1384 folds into the PNPLA domain; the sequence is LVLGGGGARG…IDNLTVDHMK (165 aa). The GXGXXG signature appears at 1224–1229; it reads GGGARG. The GXSXG motif lies at 1251–1255; sequence GTSIG. S1253 acts as the Nucleophile in catalysis. D1371 functions as the Proton acceptor in the catalytic mechanism. The short motif at 1371–1373 is the DGA/G element; it reads DGG. The tract at residues 1502-1523 is disordered; sequence LPEETEEKKKLQRTMAPRRASI.

It belongs to the NTE family.

The protein resides in the endoplasmic reticulum membrane. It catalyses the reaction a 1-acyl-sn-glycero-3-phosphocholine + H2O = sn-glycerol 3-phosphocholine + a fatty acid + H(+). Its activity is regulated as follows. Inhibited by organophosphorus esters. Its function is as follows. Intracellular phospholipase B that catalyzes the double deacylation of phosphatidylcholine (PC) to glycerophosphocholine (GroPCho). Plays an important role in membrane lipid homeostasis. Responsible for the rapid PC turnover in response to inositol, elevated temperatures, or when choline is present in the growth medium. This is Lysophospholipase nte1 (nte1) from Neosartorya fischeri (strain ATCC 1020 / DSM 3700 / CBS 544.65 / FGSC A1164 / JCM 1740 / NRRL 181 / WB 181) (Aspergillus fischerianus).